The following is a 530-amino-acid chain: Phosphoenolpyruvate carboxykinase (ATP) (530 aa).

Substrate is bound by residues arginine 58, tyrosine 195, and lysine 201. Residues lysine 201, histidine 220, and 236-244 (GLSGTGKTT) each bind ATP. Mn(2+) contacts are provided by lysine 201 and histidine 220. A Mn(2+)-binding site is contributed by aspartate 257. ATP is bound by residues glutamate 285, arginine 321, 440–441 (RI), and threonine 446. Arginine 321 contacts substrate.

It belongs to the phosphoenolpyruvate carboxykinase (ATP) family. It depends on Mn(2+) as a cofactor.

It is found in the cytoplasm. The enzyme catalyses oxaloacetate + ATP = phosphoenolpyruvate + ADP + CO2. It participates in carbohydrate biosynthesis; gluconeogenesis. In terms of biological role, involved in the gluconeogenesis. Catalyzes the conversion of oxaloacetate (OAA) to phosphoenolpyruvate (PEP) through direct phosphoryl transfer between the nucleoside triphosphate and OAA. This is Phosphoenolpyruvate carboxykinase (ATP) from Staphylococcus aureus (strain Mu3 / ATCC 700698).